A 235-amino-acid polypeptide reads, in one-letter code: Octanoyltransferase (235 aa).

In terms of domain architecture, BPL/LPL catalytic spans 44–231; it reads DTTADELWLV…HQVGLPNENN (188 aa). Substrate-binding positions include 83–90, 150–152, and 163–165; these read RGGQVTYH, SLG, and GLA. Cysteine 181 acts as the Acyl-thioester intermediate in catalysis.

Belongs to the LipB family.

The protein localises to the cytoplasm. It carries out the reaction octanoyl-[ACP] + L-lysyl-[protein] = N(6)-octanoyl-L-lysyl-[protein] + holo-[ACP] + H(+). The protein operates within protein modification; protein lipoylation via endogenous pathway; protein N(6)-(lipoyl)lysine from octanoyl-[acyl-carrier-protein]: step 1/2. Its function is as follows. Catalyzes the transfer of endogenously produced octanoic acid from octanoyl-acyl-carrier-protein onto the lipoyl domains of lipoate-dependent enzymes. Lipoyl-ACP can also act as a substrate although octanoyl-ACP is likely to be the physiological substrate. This Colwellia psychrerythraea (strain 34H / ATCC BAA-681) (Vibrio psychroerythus) protein is Octanoyltransferase.